A 154-amino-acid chain; its full sequence is MSNHMLVERVLKLIKPIVDNLNFELYHLEFKREGNNNYLRIFIDKEEGNISLEDCEAVSRAVSDILDREDPIRDPYYLEVSSPGIERTLYTHEHLKRYIGFNVIVNIQGLLKGKKKYQGKLLSFDESVLRVSCEGEEIVIPKSKISTVNLKDDL.

Belongs to the RimP family.

It localises to the cytoplasm. Required for maturation of 30S ribosomal subunits. The chain is Ribosome maturation factor RimP from Clostridium kluyveri (strain ATCC 8527 / DSM 555 / NBRC 12016 / NCIMB 10680 / K1).